A 206-amino-acid polypeptide reads, in one-letter code: Tumor protein D54 (206 aa).

M1 carries the N-acetylmethionine modification. Residues M1–N14 show a composition bias toward polar residues. Residues M1–D24 are disordered. A phosphoserine mark is found at S3, S12, S19, and S21. Residues V38 to G82 adopt a coiled-coil conformation. Phosphoserine is present on residues S96, S149, and S161. T163 is modified (phosphothreonine). S166 carries the phosphoserine modification. T173 carries the phosphothreonine modification. Positions K175–G185 are enriched in basic and acidic residues. The segment at K175–F206 is disordered. Phosphoserine occurs at positions 192 and 195.

The protein belongs to the TPD52 family. As to quaternary structure, forms a homodimer or heterodimer with other members of the family. Interacts with MAL2.

The polypeptide is Tumor protein D54 (TPD52L2) (Pongo abelii (Sumatran orangutan)).